The following is a 577-amino-acid chain: Cytidine monophosphate-N-acetylneuraminic acid hydroxylase (577 aa).

A propeptide spanning residues 1–4 (MMDR) is cleaved from the precursor. The 99-residue stretch at 14–112 (LSPAEVANLK…IEMDENNGLS (99 aa)) folds into the Rieske domain. [2Fe-2S] cluster is bound by residues cysteine 54, histidine 56, cysteine 75, and histidine 78.

The protein belongs to the CMP-Neu5Ac hydroxylase family. [2Fe-2S] cluster is required as a cofactor. In terms of tissue distribution, expressed in all tissues tested, except in brain.

It localises to the cytoplasm. It is found in the endoplasmic reticulum. It catalyses the reaction CMP-N-acetyl-beta-neuraminate + 2 Fe(II)-[cytochrome b5] + O2 + 2 H(+) = CMP-N-glycoloyl-beta-neuraminate + 2 Fe(III)-[cytochrome b5] + H2O. It functions in the pathway amino-sugar metabolism; N-acetylneuraminate metabolism. Functionally, sialic acids are components of carbohydrate chains of glycoconjugates and are involved in cell-cell recognition and cell-pathogen interactions. Catalyzes the conversion of CMP-N-acetylneuraminic acid (CMP-Neu5Ac) into its hydroxylated derivative CMP-N-glycolylneuraminic acid (CMP-Neu5Gc), a sialic acid abundantly expressed at the surface of many cells. The polypeptide is Cytidine monophosphate-N-acetylneuraminic acid hydroxylase (Cmah) (Mus musculus (Mouse)).